The primary structure comprises 130 residues: Small ribosomal subunit protein uS9 (130 aa).

A disordered region spans residues 109-130; the sequence is RMKERKKYGLKKARRAPQFSKR. Basic residues predominate over residues 111–130; that stretch reads KERKKYGLKKARRAPQFSKR.

This sequence belongs to the universal ribosomal protein uS9 family.

The protein is Small ribosomal subunit protein uS9 of Clostridium kluyveri (strain NBRC 12016).